Consider the following 471-residue polypeptide: 3-isopropylmalate dehydratase large subunit (471 aa).

Cys-349, Cys-409, and Cys-412 together coordinate [4Fe-4S] cluster.

The protein belongs to the aconitase/IPM isomerase family. LeuC type 1 subfamily. Heterodimer of LeuC and LeuD. [4Fe-4S] cluster serves as cofactor.

The enzyme catalyses (2R,3S)-3-isopropylmalate = (2S)-2-isopropylmalate. It participates in amino-acid biosynthesis; L-leucine biosynthesis; L-leucine from 3-methyl-2-oxobutanoate: step 2/4. In terms of biological role, catalyzes the isomerization between 2-isopropylmalate and 3-isopropylmalate, via the formation of 2-isopropylmaleate. The protein is 3-isopropylmalate dehydratase large subunit of Aliivibrio fischeri (strain MJ11) (Vibrio fischeri).